The sequence spans 63 residues: Kappa-theraphotoxin-Gr3a (63 aa).

Residues 1–21 (MKTSVFVLVLGLVLLFAVSFA) form the signal peptide. Residues 22–29 (TEMEESAR) constitute a propeptide that is removed on maturation. Intrachain disulfides connect Cys-31/Cys-45, Cys-38/Cys-50, and Cys-44/Cys-57.

It belongs to the neurotoxin 10 (Hwtx-1) family. 63 (VsTx1) subfamily. As to expression, expressed by the venom gland.

It localises to the secreted. Its function is as follows. Inhibits sodium channels Nav1.7/SCN9A and potassium channels Kv11.1/KCNH2. Also binds the voltage-sensor domain of the potassium channel KvAP (from the archaeon Aeropyrum pernix) with very slow apparent binding kinetics and affects channel gating. Reaches its target by dynamically partitioning into anionic or zwitterionic headgroup lipid membranes. May bind to the open state of KvAP. The sequence is that of Kappa-theraphotoxin-Gr3a from Grammostola rosea (Chilean rose tarantula).